The chain runs to 612 residues: 1,8-cineole synthase, chloroplastic (612 aa).

The transit peptide at 1–52 (MALVSVAPLASRSCLSKSLISSTHELKPLRRTILPTLRWKSATPSINMCLTT) directs the protein to the chloroplast. Mg(2+) contacts are provided by Asp-363, Asp-367, and Asp-515. The short motif at 363–367 (DDIYD) is the DDXXD motif element.

It belongs to the terpene synthase family. Tpsd subfamily. Requires Mg(2+) as cofactor. Mn(2+) is required as a cofactor.

Its subcellular location is the plastid. The protein resides in the chloroplast. The catalysed reaction is (2E)-geranyl diphosphate + H2O = 1,8-cineole + diphosphate. It participates in terpene metabolism; oleoresin biosynthesis. Its function is as follows. Terpene synthase (TPS) involved in the biosynthesis of monoterpene natural products included in conifer oleoresin secretions and volatile emissions; these compounds contribute to biotic and abiotic stress defense against herbivores and pathogens. Catalyzes the conversion of (2E)-geranyl diphosphate (GPP) to 1,8-cineole. The polypeptide is 1,8-cineole synthase, chloroplastic (Picea sitchensis (Sitka spruce)).